The following is a 422-amino-acid chain: UDP-N-acetylglucosamine 1-carboxyvinyltransferase (422 aa).

Residue 22 to 23 (KN) participates in phosphoenolpyruvate binding. Arg-92 is a binding site for UDP-N-acetyl-alpha-D-glucosamine. Cys-116 serves as the catalytic Proton donor. The residue at position 116 (Cys-116) is a 2-(S-cysteinyl)pyruvic acid O-phosphothioketal. UDP-N-acetyl-alpha-D-glucosamine contacts are provided by residues 121–125 (RPVDQ), Asp-307, and Ile-329.

It belongs to the EPSP synthase family. MurA subfamily.

It localises to the cytoplasm. It catalyses the reaction phosphoenolpyruvate + UDP-N-acetyl-alpha-D-glucosamine = UDP-N-acetyl-3-O-(1-carboxyvinyl)-alpha-D-glucosamine + phosphate. The protein operates within cell wall biogenesis; peptidoglycan biosynthesis. Functionally, cell wall formation. Adds enolpyruvyl to UDP-N-acetylglucosamine. This chain is UDP-N-acetylglucosamine 1-carboxyvinyltransferase, found in Psychrobacter arcticus (strain DSM 17307 / VKM B-2377 / 273-4).